A 357-amino-acid chain; its full sequence is Cinnamyl alcohol dehydrogenase 1 (357 aa).

An Enoyl reductase (ER) domain is found at 20–348 (GILSPYTYTL…KNDVRYRFVV (329 aa)). Residue C47 coordinates Zn(2+). An NADP(+)-binding site is contributed by S49. Residues H69, E70, C100, C103, C106, C114, and C163 each contribute to the Zn(2+) site. NADP(+) contacts are provided by residues T167, 188 to 193 (GLGGVG), 211 to 216 (SSSDKK), T251, G275, and 298 to 300 (SFI).

It belongs to the zinc-containing alcohol dehydrogenase family. In terms of assembly, homodimer. Requires Zn(2+) as cofactor. As to expression, accumulates mainly in the placenta of red fruits, and, to a lower extent, in green fruits placenta, pericarp and seeds.

It is found in the cytoplasm. The enzyme catalyses (E)-cinnamyl alcohol + NADP(+) = (E)-cinnamaldehyde + NADPH + H(+). It catalyses the reaction (E)-coniferol + NADP(+) = (E)-coniferaldehyde + NADPH + H(+). It carries out the reaction (E)-sinapyl alcohol + NADP(+) = (E)-sinapaldehyde + NADPH + H(+). The catalysed reaction is (E)-4-coumaroyl alcohol + NADP(+) = (E)-4-coumaraldehyde + NADPH + H(+). The enzyme catalyses (E)-caffeyl alcohol + NADP(+) = (E)-caffeyl aldehyde + NADPH + H(+). It catalyses the reaction vanillin + NADPH + H(+) = 4-hydroxy-3-methoxy-benzenemethanol + NADP(+). Its pathway is aromatic compound metabolism; phenylpropanoid biosynthesis. Inhibited, in a concentration-dependent manner, by N-(O-hydroxyphenyl) sulfinamoyltertiobutyl acetate (OHPAS), a specific cinnamyl alcohol dehydrogenase (CAD) inhibitor, as well as by ethylenediaminetetraacetic acid (EDTA), a metalloenzyme inhibitor. Its function is as follows. Involved in the biosynthesis of capsinoids natural products (e.g. capsiate), non-pungent alkaloids synthesized from phenylpropanoid intermediates in the placental tissue of sweet chili pepper fruit acting as repellant on herbivorous mammals. Catalyzes the reduction of vanillin to generate vanillyl alcohol, a precursor of capsiate, a non-pungent component that accumulates mainly in the placenta of mature red fruits, but also in green fruits to lower levels. Involved in lignin biosynthesis. Catalyzes the final step specific for the production of lignin monomers. Mediates the conversion of cinnamaldehyde and coniferaldehyde to cinnamyl alcohol and coniferyl alcohol, respectively. Catalyzes the NADPH-dependent reduction of 5-hydroxyconiferaldehyde, sinapaldehyde, 4-coumaraldehyde and caffeyl aldehyde to their respective alcohols. The chain is Cinnamyl alcohol dehydrogenase 1 from Capsicum annuum (Capsicum pepper).